Reading from the N-terminus, the 51-residue chain is Small, acid-soluble spore protein K (51 aa).

The interval 1 to 51 (MRNKAKGFPNPISFNGNKANNADEHASKRPDGTTRDRPQERMRSSNHFNSL) is disordered. The segment covering 21–43 (NADEHASKRPDGTTRDRPQERMR) has biased composition (basic and acidic residues).

Belongs to the SspK family.

Its subcellular location is the spore core. This Shouchella clausii (strain KSM-K16) (Alkalihalobacillus clausii) protein is Small, acid-soluble spore protein K.